Reading from the N-terminus, the 143-residue chain is Small ribosomal subunit protein uS11c (143 aa).

The protein belongs to the universal ribosomal protein uS11 family. As to quaternary structure, part of the 30S ribosomal subunit.

The protein resides in the plastid. Its subcellular location is the chloroplast. This chain is Small ribosomal subunit protein uS11c, found in Zea mays (Maize).